The following is a 440-amino-acid chain: Cytochrome c biogenesis protein Ccs1 (440 aa).

Helical transmembrane passes span Leu-19–Ile-39, Asn-78–Thr-98, and Val-164–Ala-184.

The protein belongs to the Ccs1/CcsB family. In terms of assembly, may interact with CcsA.

It localises to the plastid. The protein resides in the chloroplast thylakoid membrane. Functionally, required during biogenesis of c-type cytochromes (cytochrome c6 and cytochrome f) at the step of heme attachment. The polypeptide is Cytochrome c biogenesis protein Ccs1 (Emiliania huxleyi (Coccolithophore)).